The following is a 232-amino-acid chain: Sugar fermentation stimulation protein homolog (232 aa).

This sequence belongs to the SfsA family.

The protein is Sugar fermentation stimulation protein homolog of Pyrobaculum arsenaticum (strain DSM 13514 / JCM 11321 / PZ6).